The sequence spans 93 residues: Cell division topological specificity factor (93 aa).

The protein belongs to the MinE family.

Prevents the cell division inhibition by proteins MinC and MinD at internal division sites while permitting inhibition at polar sites. This ensures cell division at the proper site by restricting the formation of a division septum at the midpoint of the long axis of the cell. The protein is Cell division topological specificity factor of Agathobacter rectalis (strain ATCC 33656 / DSM 3377 / JCM 17463 / KCTC 5835 / VPI 0990) (Eubacterium rectale).